A 413-amino-acid chain; its full sequence is Arginine biosynthesis bifunctional protein ArgJ (413 aa).

Residues threonine 160, lysine 186, threonine 197, glutamate 277, asparagine 408, and threonine 413 each contribute to the substrate site. The active-site Nucleophile is threonine 197.

The protein belongs to the ArgJ family. As to quaternary structure, heterotetramer of two alpha and two beta chains.

It localises to the cytoplasm. It catalyses the reaction N(2)-acetyl-L-ornithine + L-glutamate = N-acetyl-L-glutamate + L-ornithine. The catalysed reaction is L-glutamate + acetyl-CoA = N-acetyl-L-glutamate + CoA + H(+). It participates in amino-acid biosynthesis; L-arginine biosynthesis; L-ornithine and N-acetyl-L-glutamate from L-glutamate and N(2)-acetyl-L-ornithine (cyclic): step 1/1. It functions in the pathway amino-acid biosynthesis; L-arginine biosynthesis; N(2)-acetyl-L-ornithine from L-glutamate: step 1/4. In terms of biological role, catalyzes two activities which are involved in the cyclic version of arginine biosynthesis: the synthesis of N-acetylglutamate from glutamate and acetyl-CoA as the acetyl donor, and of ornithine by transacetylation between N(2)-acetylornithine and glutamate. In Prochlorococcus marinus (strain SARG / CCMP1375 / SS120), this protein is Arginine biosynthesis bifunctional protein ArgJ.